Here is a 430-residue protein sequence, read N- to C-terminus: Solanesyl-diphosphate synthase 1, mitochondrial (430 aa).

Residues 1 to 31 constitute a mitochondrion transit peptide; the sequence is MSWRWALARRVAALGATSGGGDGATAQAQRL. Isopentenyl diphosphate contacts are provided by Lys133, Arg136, and His182. The Mg(2+) site is built by Asp189 and Asp193. Arg198 lines the an all-trans-polyprenyl diphosphate pocket. Arg199 serves as a coordination point for isopentenyl diphosphate. Residues Lys275, Thr276, Gln313, and Lys330 each contribute to the an all-trans-polyprenyl diphosphate site.

The protein belongs to the FPP/GGPP synthase family. As to quaternary structure, homodimer. Requires Mg(2+) as cofactor. As to expression, expressed in leaves, stems and roots. Highest expression in roots.

The protein resides in the mitochondrion. The catalysed reaction is 7 isopentenyl diphosphate + (2E)-geranyl diphosphate = all-trans-nonaprenyl diphosphate + 7 diphosphate. The protein operates within cofactor biosynthesis; ubiquinone biosynthesis. Functionally, involved in the supply of solanesyl diphosphate for ubiquinone-9 (UQ-9) biosynthesis in mitochondria. Farnesyl diphosphate is the preferred substrate. This chain is Solanesyl-diphosphate synthase 1, mitochondrial, found in Oryza sativa subsp. japonica (Rice).